Reading from the N-terminus, the 645-residue chain is MLGVCYYPEHWPKARWKEDARRMREAGLSYVRVGEFAWALLEPEPGRLEWGWLDEALATLAAEGLKVVLGTPTATPPKWLVDRYPEVLPVDREGRRRRFGGRRHYCFSSPAYREEARRIVTLLAERYGGLEAVAGFQTDNEYGCHGTVRCYCPRCQEAFRGWLKARYGTIEALNEAWGTAFWSQRYRNFTEVELPHLTVAEPNPSHLLDYYRFASDQVRAFNRLQVEILRAHAPGKFITHNFMGFFTDLDAFALAQDLDFASWDSYPLGFTDLMPLPPEEKLRYARTGHPDVAAFHHDLYRGVGRGRFWVMEQQPGPVNWAPHNPSPTPGMVRLWTWEALAHGAEVVSYFRWRQAPFAQEQMHAGLHRPDSAPDQGFFEAKQVAEELAALALPPVAQAPVALVFDYEAAWVYEVQPQGAEWSYLGLIYLFYSALRRLGLDVDVVPPGASLRGYALTVVPSLPIVRGEALKAFQEAEGIVLFGPRSGSKTETFQIPRELPPGPLQALLPLKVVRVESLPPGLLEVAEGPMGRFSLGLWREWVESPLRPWLAFADGGGALYREGRYLYLAAWPSPELLGVLLAGLAQEAGLRPVFLPEGLRLRRRGPWVFAFNYGPEAVEAPAPEGARFLLGGKRVGPYDLAVWEEA.

Arginine 102 provides a ligand contact to substrate. Cysteine 106 is a Zn(2+) binding site. Asparagine 140 lines the substrate pocket. The active-site Proton donor is the glutamate 141. Zn(2+) contacts are provided by cysteine 150, cysteine 152, and cysteine 155. The active-site Nucleophile is the glutamate 312. Substrate-binding positions include tryptophan 320 and 360 to 363 (EQMH).

The protein belongs to the glycosyl hydrolase 42 family.

It catalyses the reaction Hydrolysis of terminal non-reducing beta-D-galactose residues in beta-D-galactosides.. Functionally, hydrolyzes chromogen 5-bromo-4-chloro-3-indolyl-beta-D-galactopyranoside (X-Gal) and p-nitrophenyl-beta-D-galactoside (pNPGal). In Thermus sp, this protein is Beta-galactosidase BgaA.